A 571-amino-acid chain; its full sequence is Proline-rich protein 35 (571 aa).

Disordered regions lie at residues 1–27 (MSRE…PHYI), 79–187 (GSTT…EGSV), 286–402 (APVS…GSPE), and 476–571 (GPQA…GAEV). Basic residues predominate over residues 16 to 26 (ARSRKPKKPHY). Positions 165–175 (GMGGDPRGVGA) are enriched in gly residues. Residues 316–336 (TPRDPGQEGELERAAQSDPRR) are compositionally biased toward basic and acidic residues. Residues 351 to 367 (PSLTRFCSRSSLPTGSS) show a composition bias toward polar residues. Positions 380-399 (PETPGPEGPLPLQPRGPVPG) are enriched in pro residues.

This chain is Proline-rich protein 35 (PRR35), found in Homo sapiens (Human).